The primary structure comprises 282 residues: HTH-type transcriptional activator RhaR (282 aa).

The HTH araC/xylS-type domain occupies 179 to 277; the sequence is DKLITRLAAS…GMTPSQWRHL (99 aa). 2 DNA-binding regions (H-T-H motif) span residues 196–217 and 244–267; these read DKFCDEASCSERVLRQQFRQQT and ISDISTECGFEDSNYFSVVFTRET.

Binds DNA as a dimer.

The protein resides in the cytoplasm. In terms of biological role, activates expression of the rhaSR operon in response to L-rhamnose. The sequence is that of HTH-type transcriptional activator RhaR from Escherichia coli O139:H28 (strain E24377A / ETEC).